The chain runs to 141 residues: Ribosome-binding factor A (141 aa).

The tract at residues 120–141 (SPHVQRDLQENDDQEDDSEGSL) is disordered. Acidic residues predominate over residues 129–141 (ENDDQEDDSEGSL).

This sequence belongs to the RbfA family. Monomer. Binds 30S ribosomal subunits, but not 50S ribosomal subunits or 70S ribosomes.

It is found in the cytoplasm. One of several proteins that assist in the late maturation steps of the functional core of the 30S ribosomal subunit. Associates with free 30S ribosomal subunits (but not with 30S subunits that are part of 70S ribosomes or polysomes). Required for efficient processing of 16S rRNA. May interact with the 5'-terminal helix region of 16S rRNA. The chain is Ribosome-binding factor A from Zymomonas mobilis subsp. mobilis (strain ATCC 31821 / ZM4 / CP4).